The chain runs to 385 residues: Mannitol-1-phosphate 5-dehydrogenase (385 aa).

4–15 (AVHFGAGNIGRG) contacts NAD(+).

Belongs to the mannitol dehydrogenase family.

The catalysed reaction is D-mannitol 1-phosphate + NAD(+) = beta-D-fructose 6-phosphate + NADH + H(+). The chain is Mannitol-1-phosphate 5-dehydrogenase from Lactococcus lactis subsp. lactis (strain IL1403) (Streptococcus lactis).